We begin with the raw amino-acid sequence, 158 residues long: Pycsar effector protein SaPycTM (158 aa).

Helical transmembrane passes span 20–40 (FADAKALAIISINGFILNFNF), 53–73 (IFNFTAFILLIITIILAAFAV), and 136–156 (VFIISALGYSCLLFSSIFQII).

Its subcellular location is the cell membrane. Pycsar (pyrimidine cyclase system for antiphage resistance) provides immunity against bacteriophage. The pyrimidine cyclase (PycC) synthesizes cyclic nucleotides in response to infection; these serve as specific second messenger signals. The signals activate the adjacent effector, leading to bacterial cell death and abortive phage infection. A clade E Pycsar system. Its function is as follows. The effector gene of a two-gene Pycsar system. Expression of this and adjacent SaPycC cytidylate cyclase (AC P0DV38) probably confers resistance to bacteriophage. The genes are probably only expressed in response to bacteriophage infection. Probably only responds to cCMP (produced by its cognate NTP cyclase), acts by impairing membrane integrity. In Staphylococcus aureus, this protein is Pycsar effector protein SaPycTM.